The following is a 1004-amino-acid chain: Protein phosphatase 1 regulatory subunit 12A (1004 aa).

Residues 35 to 38 (KVKF) are important for interaction with PPP1CB. ANK repeat units follow at residues 39 to 68 (DDGA…DINY), 72 to 101 (DGLT…NINQ), 105 to 134 (EGWI…HVGA), 138 to 164 (EGDT…RQGV), 198 to 227 (SGGT…DVNI), and 231 to 260 (DGWT…DMEA). A compositionally biased stretch (basic and acidic residues) spans 291–300 (HSEKREKKSP). Residues 291–920 (HSEKREKKSP…SYLEDRKPYC (630 aa)) form a disordered region. Residues 302–316 (IESTANLDNNQTQKT) show a composition bias toward polar residues. 2 stretches are compositionally biased toward basic and acidic residues: residues 318–329 (KNKETLIMEQEK) and 336–353 (SLEH…KDES). The segment covering 357-369 (SEEEEDDDSESEA) has biased composition (acidic residues). A compositionally biased stretch (polar residues) spans 378–392 (ANANTTSTQSASMTA). Residues 417–427 (SPKEEERKDES) show a composition bias toward basic and acidic residues. Over residues 464–475 (RSASSPRLSSSL) the composition is skewed to low complexity. Positions 476-486 (DNKEKEKDGKG) are enriched in basic and acidic residues. Residues 514–525 (SSASSIRSGSSY) are compositionally biased toward low complexity. The segment covering 528–538 (RKWEEDVKKNS) has biased composition (basic and acidic residues). A compositionally biased stretch (polar residues) spans 539-554 (LNEGPTSLNTSYQRSG). 2 stretches are compositionally biased toward low complexity: residues 564 to 578 (VSSN…VTSS) and 587 to 602 (ASAN…STSA). A compositionally biased stretch (basic and acidic residues) spans 613–624 (WAEDSTEKEKDS). A compositionally biased stretch (low complexity) spans 625-659 (VPTAVTVPVAPSVVNAAATTTAMTTATSGTVSSTS). Residues 672–681 (VRDEESESQR) are compositionally biased toward basic and acidic residues. Residues 682 to 692 (KARSRQARQSR) are compositionally biased toward basic residues. Thr-695 carries the post-translational modification Phosphothreonine; by ROCK2. Over residues 717 to 765 (RTREQENEEKEKEEKEKQDKEKQEEKKESETKDDDYRQRYSRTVEEPYH) the composition is skewed to basic and acidic residues. Positions 770 to 793 (TSTSTSTSSTSSLSTSTSSLSSSS) are enriched in low complexity. The segment covering 794-808 (QLNRPNSLIGITSAY) has biased composition (polar residues). The segment covering 812-837 (GTKESEREGGKKEEEKEEDKSQPKSI) has biased composition (basic and acidic residues). Residues 838–849 (RERRRPREKRRS) show a composition bias toward basic residues. The residue at position 850 (Thr-850) is a Phosphothreonine; by ROCK2. The span at 864 to 880 (QEHQSDSEEGTNKKETQ) shows a compositional bias: basic and acidic residues. The segment covering 881-896 (SDSLSRYDTGSLSVSS) has biased composition (polar residues).

As to quaternary structure, PP1 comprises a catalytic subunit, PPP1CA, PPP1CB or PPP1CC, and one or several targeting or regulatory subunits. PPP1R12A mediates binding to myosin. In terms of processing, phosphorylated by CIT (Rho-associated kinase) and by ROCK2 on serine and threonine residues. Phosphorylation at Thr-695 leads to inhibition of myosin phosphatase activity. Phosphorylation at Thr-850 abolishes myosin binding. May be phosphorylated at Thr-695 by DMPK; may inhibit the myosin phosphatase activity. As to expression, detected in brain, lung, aorta, heart, gizzard, stomach, oviduct, spleen, kidney and small intestine.

The protein localises to the cytoplasm. Its subcellular location is the cytoskeleton. It is found in the stress fiber. Functionally, regulates myosin phosphatase activity. The polypeptide is Protein phosphatase 1 regulatory subunit 12A (PPP1R12A) (Gallus gallus (Chicken)).